The primary structure comprises 121 residues: Large ribosomal subunit protein uL14c (121 aa).

Belongs to the universal ribosomal protein uL14 family. Part of the 50S ribosomal subunit.

It is found in the plastid. It localises to the chloroplast. Functionally, binds to 23S rRNA. In Emiliania huxleyi (Coccolithophore), this protein is Large ribosomal subunit protein uL14c.